The primary structure comprises 122 residues: Large ribosomal subunit protein uL14c (122 aa).

The protein belongs to the universal ribosomal protein uL14 family. As to quaternary structure, part of the 50S ribosomal subunit.

Its subcellular location is the plastid. The protein localises to the chloroplast. Its function is as follows. Binds to 23S rRNA. This Populus alba (White poplar) protein is Large ribosomal subunit protein uL14c.